A 382-amino-acid polypeptide reads, in one-letter code: Opsin Rh5 (382 aa).

Residues 1–49 are Extracellular-facing; sequence MHINGPSGPQAYVNDSLGDGSVFPMGHGYPAEYQHMVHAHWRGFREAPI. Residue N14 is glycosylated (N-linked (GlcNAc...) asparagine). Residues 50 to 76 traverse the membrane as a helical segment; it reads YYHAGFYIAFIVLMLSSIFGNGLVIWI. Residues 77–88 lie on the Cytoplasmic side of the membrane; it reads FSTSKSLRTPSN. A helical transmembrane segment spans residues 89 to 112; sequence LLILNLAIFDLFMCTNMPHYLINA. At 113-127 the chain is on the extracellular side; that stretch reads TVGYIVGGDLGCDIY. C124 and C201 are disulfide-bonded. Residues 128–147 form a helical membrane-spanning segment; that stretch reads ALNGGISGMGASITNAFIAF. Topologically, residues 148–165 are cytoplasmic; the sequence is DRYKTISNPIDGRLSYGQ. A helical transmembrane segment spans residues 166–190; that stretch reads IVLLILFTWLWATPFSVLPLFQIWG. The Extracellular segment spans residues 191–214; sequence RYQPEGFLTTCSFDYLTNTDENRL. A helical membrane pass occupies residues 215–242; sequence FVRTIFVWSYVIPMTMILVSYYKLFTHV. The Cytoplasmic segment spans residues 243–278; sequence RVHEKMLAEQAKKMNVKSLSANANADNMSVELRIAK. Residues 279–302 traverse the membrane as a helical segment; the sequence is AALIIYMLFILAWTPYSVVALIGC. Residues 303–310 are Extracellular-facing; sequence FGEQQLIT. A helical membrane pass occupies residues 311 to 335; it reads PFVSMLPCLACKSVSCLDPWVYATS. K322 bears the N6-(retinylidene)lysine mark. The Cytoplasmic portion of the chain corresponds to 336 to 382; sequence HPKYRLELERRLPWLGIREKHATSGTSGGQESVASVSGDTLALSVQN. Residues 357–382 are disordered; the sequence is ATSGTSGGQESVASVSGDTLALSVQN. Polar residues predominate over residues 358-382; the sequence is TSGTSGGQESVASVSGDTLALSVQN.

Belongs to the G-protein coupled receptor 1 family. Opsin subfamily. In terms of processing, phosphorylated on some or all of the serine and threonine residues present in the C-terminal region. Expressed specifically in the retina. Each Drosophila eye is composed of 800 facets or ommatidia. Each ommatidium contains 8 photoreceptor cells (R1-R8), the R1 to R6 cells are outer cells, while R7 and R8 are inner cells. Rh5 is expressed only in R8 photoreceptor cells in a subset of ommatidia.

Its subcellular location is the cell projection. It localises to the rhabdomere membrane. In terms of biological role, visual pigments are the light-absorbing molecules that mediate vision. They consist of an apoprotein, opsin, covalently linked to cis-retinal. In Drosophila melanogaster (Fruit fly), this protein is Opsin Rh5 (Rh5).